A 79-amino-acid chain; its full sequence is Tau-theraphotoxin-Hs1a (79 aa).

Intrachain disulfides connect cysteine 2–cysteine 16, cysteine 9–cysteine 23, cysteine 15–cysteine 31, cysteine 44–cysteine 58, cysteine 51–cysteine 63, and cysteine 57–cysteine 71. Domain repeat units lie at residues 2–31 and 42–71; these read CAKE…IPHC and TNCA…IPYC. The 2 X approximate repeats with cysteine pattern C-C-CC-C-C stretch occupies residues 2-71; that stretch reads CAKEGEVCSW…DCPLAFIPYC (70 aa).

This sequence belongs to the neurotoxin 23 family. Double-knot toxin subfamily. As to quaternary structure, interacts with TRPV1 (2 toxins (4 moieties) bind 1 channel (homotetramer)). In terms of tissue distribution, expressed by the venom gland.

The protein localises to the secreted. In terms of biological role, selectively activates the heat-activated TRPV1 channel. It binds to TRPV1 in an open state-dependent manner, trapping it there to produce irreversible currents. It binds to the outer edge of the external pore of TRPV1 in a counterclockwise configuration, using a limited protein-protein interface and inserting hydrophobic residues into the bilayer. It also partitions naturally into membranes, with the two lobes exhibiting opposing energetics for membrane partitioning (K1) and channel activation (K2). In addition, the toxin disrupts a cluster of hydrophobic residues behind the selectivity filter that are critical for channel activation. This chain is Tau-theraphotoxin-Hs1a, found in Cyriopagopus schmidti (Chinese bird spider).